A 204-amino-acid polypeptide reads, in one-letter code: ATP synthase subunit b 2 (204 aa).

Residues 8–28 (AQSSTTEGAEAHDAAAAGEVH) form a disordered region. The chain crosses the membrane as a helical span at residues 56-76 (LLWLAITFGLFYLLMSKVIIP).

This sequence belongs to the ATPase B chain family. F-type ATPases have 2 components, F(1) - the catalytic core - and F(0) - the membrane proton channel. F(1) has five subunits: alpha(3), beta(3), gamma(1), delta(1), epsilon(1). F(0) has three main subunits: a(1), b(2) and c(10-14). The alpha and beta chains form an alternating ring which encloses part of the gamma chain. F(1) is attached to F(0) by a central stalk formed by the gamma and epsilon chains, while a peripheral stalk is formed by the delta and b chains.

It localises to the cell inner membrane. F(1)F(0) ATP synthase produces ATP from ADP in the presence of a proton or sodium gradient. F-type ATPases consist of two structural domains, F(1) containing the extramembraneous catalytic core and F(0) containing the membrane proton channel, linked together by a central stalk and a peripheral stalk. During catalysis, ATP synthesis in the catalytic domain of F(1) is coupled via a rotary mechanism of the central stalk subunits to proton translocation. Functionally, component of the F(0) channel, it forms part of the peripheral stalk, linking F(1) to F(0). The b'-subunit is a diverged and duplicated form of b found in plants and photosynthetic bacteria. The sequence is that of ATP synthase subunit b 2 (atpF2) from Rhizobium meliloti (strain 1021) (Ensifer meliloti).